Here is a 145-residue protein sequence, read N- to C-terminus: Large-conductance mechanosensitive channel (145 aa).

2 helical membrane-spanning segments follow: residues 14–34 (VIDL…VNSL) and 83–103 (GAFL…FLLV).

Belongs to the MscL family. In terms of assembly, homopentamer.

Its subcellular location is the cell inner membrane. Functionally, channel that opens in response to stretch forces in the membrane lipid bilayer. May participate in the regulation of osmotic pressure changes within the cell. The protein is Large-conductance mechanosensitive channel of Paracoccus denitrificans (strain Pd 1222).